A 77-amino-acid chain; its full sequence is U8-lycotoxin-Ls1t (77 aa).

An N-terminal signal peptide occupies residues 1–20; the sequence is MKLIIFTGLVPFAIVSLIEA. The propeptide occupies 21–26; sequence QAENEK.

Belongs to the neurotoxin 19 (CSTX) family. 08 (U8-Lctx) subfamily. In terms of processing, contains 4 disulfide bonds. Expressed by the venom gland.

It localises to the secreted. The chain is U8-lycotoxin-Ls1t from Lycosa singoriensis (Wolf spider).